A 112-amino-acid chain; its full sequence is Large ribosomal subunit protein eL30 (112 aa).

It belongs to the eukaryotic ribosomal protein eL30 family. In terms of tissue distribution, expressed in roots and leaves.

This is Large ribosomal subunit protein eL30 from Triticum aestivum (Wheat).